We begin with the raw amino-acid sequence, 261 residues long: Segregation and condensation protein A (261 aa).

This sequence belongs to the ScpA family. As to quaternary structure, component of a cohesin-like complex composed of ScpA, ScpB and the Smc homodimer, in which ScpA and ScpB bind to the head domain of Smc. The presence of the three proteins is required for the association of the complex with DNA.

It is found in the cytoplasm. Participates in chromosomal partition during cell division. May act via the formation of a condensin-like complex containing Smc and ScpB that pull DNA away from mid-cell into both cell halves. This is Segregation and condensation protein A from Ligilactobacillus salivarius (strain UCC118) (Lactobacillus salivarius).